Consider the following 399-residue polypeptide: MASKKLHGRDFYNKIGRPKRILAPMVDQSELPWRILARRSGADLCYSPMFHSRLFGESEDYRNKVFSTRTIPEERPLIIQFCGNDPEIMLKAAKIAAPYCDAVDVNLGCPQGIAKKGKYGSFLQENWNLIESIITKLHTELSIPVTAKIRIFPDPQKTLDYAKMILKAGASILAVHGRLREQKGHFTGIADWEQIQMLRKNLPSETVLFANGNILHAQDIDRCIKYTGVDGVLSAEGSLYNPRIFLPPSSPLMTLYPRIDDMCEEYLNIIREFKLESDYSSLSAIKGHLFKLMRPLLSIHTDIRSKLAQGCTPRDFETFPPVVAMLRKRLLECEEKGEINEDKDVKESVKDSMGYPVIPWWRVQPYIRPLEVPLVTKRKPVEVTADEGPVKKKVNASVA.

FMN-binding positions include 24–26 (PMV) and Gln80. The active-site Proton donor is Cys109. Residues Lys148, His176, 211–213 (NGN), and 235–236 (AE) contribute to the FMN site.

The protein belongs to the Dus family. Dus1 subfamily. It depends on FMN as a cofactor.

The protein resides in the nucleus. It localises to the mitochondrion. It carries out the reaction 5,6-dihydrouridine(16) in tRNA + NADP(+) = uridine(16) in tRNA + NADPH + H(+). The enzyme catalyses 5,6-dihydrouridine(16) in tRNA + NAD(+) = uridine(16) in tRNA + NADH + H(+). It catalyses the reaction 5,6-dihydrouridine(17) in tRNA + NAD(+) = uridine(17) in tRNA + NADH + H(+). The catalysed reaction is 5,6-dihydrouridine(17) in tRNA + NADP(+) = uridine(17) in tRNA + NADPH + H(+). It carries out the reaction a 5,6-dihydrouridine in mRNA + NAD(+) = a uridine in mRNA + NADH + H(+). The enzyme catalyses a 5,6-dihydrouridine in mRNA + NADP(+) = a uridine in mRNA + NADPH + H(+). Its function is as follows. Catalyzes the synthesis of dihydrouridine, a modified base found in the D-loop of most tRNAs. Also able to mediate dihydrouridylation of some mRNAs, thereby affecting their translation. The polypeptide is tRNA-dihydrouridine(16/17) synthase [NAD(P)(+)] (Schizosaccharomyces pombe (strain 972 / ATCC 24843) (Fission yeast)).